A 361-amino-acid chain; its full sequence is MTVSTAQMRFWSPEVRELEPYVPGEQPKIQNLLKLNTNENPYPPSPKVVEAVQAVLHEQADALRLYPDPDATALKQAIAKQQNIDVSQVFVGNGSDEVLAHIFKAFFLQDEPILYPDITYSFYPVYSQFFGTKTKEIPLNESFEIDVRDYTQPNGGVIITNPNAPTSIALSLAEIEQVLQANPDRVVVIDEAYVDFGAESAVSLINRYENLVVCQTTSKSRSLAGLRVGFAIAQSHLIAALEAVKNSFNSYPIDRFAIAAAVASFEDQAYFEEQCQKVITSREKLVRDLTELGFNVLPSKANFIFATHSQHDAGQLAQKLREQGIIVRYFNKPRINQFLRITVGTDEQNARLVQTLKQDIL.

Position 219 is an N6-(pyridoxal phosphate)lysine (Lys-219).

It belongs to the class-II pyridoxal-phosphate-dependent aminotransferase family. Histidinol-phosphate aminotransferase subfamily. As to quaternary structure, homodimer. Requires pyridoxal 5'-phosphate as cofactor.

The enzyme catalyses L-histidinol phosphate + 2-oxoglutarate = 3-(imidazol-4-yl)-2-oxopropyl phosphate + L-glutamate. Its pathway is amino-acid biosynthesis; L-histidine biosynthesis; L-histidine from 5-phospho-alpha-D-ribose 1-diphosphate: step 7/9. In Acinetobacter baumannii (strain AB307-0294), this protein is Histidinol-phosphate aminotransferase.